The sequence spans 371 residues: Cytochrome b (371 aa).

Transmembrane regions (helical) follow at residues 25–45 (FGSMLLTCLALQVLTGFFLAV), 69–90 (WMMQNLHAIGASMFFICIYIHI), 105–125 (WMSGITLLITLMATAFFGYVL), and 170–190 (FFALHFILPFAIISLSSLHVI). Positions 75 and 89 each coordinate heme b. His174 and His188 together coordinate heme b. His193 is an a ubiquinone binding site. 4 helical membrane passes run 218–238 (YKDFLLLTLMVLSLFIIVSFF), 280–300 (LGGALALVMSIMILFTIPFTH), 312–332 (LYQLMFWTLVSTFITITWAAT), and 339–358 (FITISQVTSTLYFTFFISIP).

The protein belongs to the cytochrome b family. In terms of assembly, the cytochrome bc1 complex contains 3 respiratory subunits (MT-CYB, CYC1 and UQCRFS1), 2 core proteins (UQCRC1 and UQCRC2) and probably 6 low-molecular weight proteins. Heme b is required as a cofactor.

It localises to the mitochondrion inner membrane. Its function is as follows. Component of the ubiquinol-cytochrome c reductase complex (complex III or cytochrome b-c1 complex) that is part of the mitochondrial respiratory chain. The b-c1 complex mediates electron transfer from ubiquinol to cytochrome c. Contributes to the generation of a proton gradient across the mitochondrial membrane that is then used for ATP synthesis. In Malayopython reticulatus (Reticulate python), this protein is Cytochrome b (MT-CYB).